Consider the following 74-residue polypeptide: Progonadoliberin-3 (74 aa).

The N-terminal stretch at 1 to 15 (VQVVVLALVAQVTLS) is a signal peptide. Position 16 is a pyrrolidone carboxylic acid (Gln-16). Position 25 is a glycine amide (Gly-25).

Belongs to the GnRH family.

It is found in the secreted. Its function is as follows. Stimulates the secretion of gonadotropins. In Oncorhynchus mykiss (Rainbow trout), this protein is Progonadoliberin-3 (gnrh3).